The chain runs to 660 residues: Bifunctional polymyxin resistance protein ArnA (660 aa).

The interval M1–V304 is formyltransferase ArnAFT. The active-site Proton donor; for formyltransferase activity is the H104. (6R)-10-formyltetrahydrofolate is bound by residues R114 and V136–D140. A dehydrogenase ArnADH region spans residues H314–N660. Residues D347 and D368–I369 contribute to the NAD(+) site. Residues A393, Y398, and T432–S433 contribute to the UDP-alpha-D-glucuronate site. E434 acts as the Proton acceptor; for decarboxylase activity in catalysis. Residues R460, N492, K526–R535, and Y613 contribute to the UDP-alpha-D-glucuronate site. R619 (proton donor; for decarboxylase activity) is an active-site residue.

The protein in the N-terminal section; belongs to the Fmt family. UDP-L-Ara4N formyltransferase subfamily. It in the C-terminal section; belongs to the NAD(P)-dependent epimerase/dehydratase family. UDP-glucuronic acid decarboxylase subfamily. As to quaternary structure, homohexamer, formed by a dimer of trimers.

It catalyses the reaction UDP-alpha-D-glucuronate + NAD(+) = UDP-beta-L-threo-pentopyranos-4-ulose + CO2 + NADH. It carries out the reaction UDP-4-amino-4-deoxy-beta-L-arabinose + (6R)-10-formyltetrahydrofolate = UDP-4-deoxy-4-formamido-beta-L-arabinose + (6S)-5,6,7,8-tetrahydrofolate + H(+). It functions in the pathway nucleotide-sugar biosynthesis; UDP-4-deoxy-4-formamido-beta-L-arabinose biosynthesis; UDP-4-deoxy-4-formamido-beta-L-arabinose from UDP-alpha-D-glucuronate: step 1/3. The protein operates within nucleotide-sugar biosynthesis; UDP-4-deoxy-4-formamido-beta-L-arabinose biosynthesis; UDP-4-deoxy-4-formamido-beta-L-arabinose from UDP-alpha-D-glucuronate: step 3/3. Its pathway is bacterial outer membrane biogenesis; lipopolysaccharide biosynthesis. In terms of biological role, bifunctional enzyme that catalyzes the oxidative decarboxylation of UDP-glucuronic acid (UDP-GlcUA) to UDP-4-keto-arabinose (UDP-Ara4O) and the addition of a formyl group to UDP-4-amino-4-deoxy-L-arabinose (UDP-L-Ara4N) to form UDP-L-4-formamido-arabinose (UDP-L-Ara4FN). The modified arabinose is attached to lipid A and is required for resistance to polymyxin and cationic antimicrobial peptides. This chain is Bifunctional polymyxin resistance protein ArnA, found in Photorhabdus laumondii subsp. laumondii (strain DSM 15139 / CIP 105565 / TT01) (Photorhabdus luminescens subsp. laumondii).